A 152-amino-acid polypeptide reads, in one-letter code: Large ribosomal subunit protein uL15 (152 aa).

A disordered region spans residues 1 to 66 (MLQLHTIKPN…PLHRRLPKKG (66 aa)). The segment covering 24–36 (ESSGLGKTCGKGN) has biased composition (gly residues).

It belongs to the universal ribosomal protein uL15 family. In terms of assembly, part of the 50S ribosomal subunit.

Functionally, binds to the 23S rRNA. This Akkermansia muciniphila (strain ATCC BAA-835 / DSM 22959 / JCM 33894 / BCRC 81048 / CCUG 64013 / CIP 107961 / Muc) protein is Large ribosomal subunit protein uL15.